The sequence spans 144 residues: Large ribosomal subunit protein uL15 (144 aa).

A disordered region spans residues 1–57 (MKLNDLSPAPGSRREKHRPGRGIGSGLGKTGGRGHKGQTSRSGGSIAPGFEGGQQPL). A compositionally biased stretch (gly residues) spans 21–31 (RGIGSGLGKTG).

This sequence belongs to the universal ribosomal protein uL15 family. In terms of assembly, part of the 50S ribosomal subunit.

Functionally, binds to the 23S rRNA. In Pseudomonas putida (strain ATCC 700007 / DSM 6899 / JCM 31910 / BCRC 17059 / LMG 24140 / F1), this protein is Large ribosomal subunit protein uL15.